Reading from the N-terminus, the 143-residue chain is UPF0047 protein MTH_771 (143 aa).

The protein belongs to the UPF0047 family.

This is UPF0047 protein MTH_771 from Methanothermobacter thermautotrophicus (strain ATCC 29096 / DSM 1053 / JCM 10044 / NBRC 100330 / Delta H) (Methanobacterium thermoautotrophicum).